The following is a 182-amino-acid chain: ATP-dependent protease subunit HslV (182 aa).

Residue Thr-12 is part of the active site. Residues Ala-167, Cys-170, and Thr-173 each coordinate Na(+).

It belongs to the peptidase T1B family. HslV subfamily. As to quaternary structure, a double ring-shaped homohexamer of HslV is capped on each side by a ring-shaped HslU homohexamer. The assembly of the HslU/HslV complex is dependent on binding of ATP.

It localises to the cytoplasm. The enzyme catalyses ATP-dependent cleavage of peptide bonds with broad specificity.. With respect to regulation, allosterically activated by HslU binding. Its function is as follows. Protease subunit of a proteasome-like degradation complex believed to be a general protein degrading machinery. This chain is ATP-dependent protease subunit HslV, found in Paramagnetospirillum magneticum (strain ATCC 700264 / AMB-1) (Magnetospirillum magneticum).